The sequence spans 398 residues: MINDGGAKPETLLRVAEIGGRGRSLVAAQSLRAGQVILRESPLLLYSAFPFLSSSVSPYCDHCFRLLASSAHQKCQSCSLVSFCSPNCFASHTPWLCESLRRLHQSSSSAFSDQPSDRQVQARFLLSAYNLAAASPSDFQILLSLQGSGSSNGDPSCSAGDSAAAGFLHSLLSSVCPSLPVSISPDLTAALLSKDKVNAFGLMEPCSVSNEKRSVRAYGIYPKTSFFNHDCLPNACRFDYVDSASDGNTDIIIRMIHDVPEGREVCLSYFPVNMNYSSRQKRLLEDYGFKCDCDRCKVEFSWSEGEEDENEIMEEMEDQDEQEEMEDSVGENEEEVCGNGVDDESNFPHAYFFVRYMCEKENCFGTLAPLPPKTHDASRVLECNVCGSVKEDEVGVNQ.

In terms of domain architecture, SET spans 11 to 270 (TLLRVAEIGG…EGREVCLSYF (260 aa)).

This sequence belongs to the class V-like SAM-binding methyltransferase superfamily. Histone-lysine methyltransferase family. SET2 subfamily.

The protein resides in the nucleus. Its subcellular location is the chromosome. It carries out the reaction L-lysyl-[histone] + S-adenosyl-L-methionine = N(6)-methyl-L-lysyl-[histone] + S-adenosyl-L-homocysteine + H(+). Functionally, histone methyltransferase. The polypeptide is Histone-lysine N-methyltransferase ASHR2 (ASHR2) (Arabidopsis thaliana (Mouse-ear cress)).